A 350-amino-acid chain; its full sequence is MSKTRKIIHIDMDYFFAQVEEKANPSLKDKPFAVGGTNPKRGVISTCNYIAREYGVRSAMPTAIAMQKCPNLILLNTDFAKYKATSAVIRDIFYSFTDKVEPLSLDEAYLDVTDVKEYKNSATLIAQAIKQEIFNKTGLTGSAGVAPNKLLAKIASDINKPNGLYVITPEQVDSFVKDLPVKKLFGVGKVSQEKLKNMNVETCLDLQQLSLATLVDKFGKFGSSLYNYARGIDNREVNPVRIRKSVSVENTYLEDLKTLEACLEKLPNLYNKLTSRMTEEHYKSIIGIVVKFTDTKFNKTSLTRVAKTLDKKVLKNLIIELHQKQNYHIRLIGIGIKLGEIDDRQLSLVF.

A UmuC domain is found at Ile7–Gly188. Residues Asp11 and Asp106 each contribute to the Mg(2+) site. Glu107 is a catalytic residue.

This sequence belongs to the DNA polymerase type-Y family. Monomer. Mg(2+) serves as cofactor.

Its subcellular location is the cytoplasm. It catalyses the reaction DNA(n) + a 2'-deoxyribonucleoside 5'-triphosphate = DNA(n+1) + diphosphate. Functionally, poorly processive, error-prone DNA polymerase involved in untargeted mutagenesis. Copies undamaged DNA at stalled replication forks, which arise in vivo from mismatched or misaligned primer ends. These misaligned primers can be extended by PolIV. Exhibits no 3'-5' exonuclease (proofreading) activity. May be involved in translesional synthesis, in conjunction with the beta clamp from PolIII. This Francisella philomiragia subsp. philomiragia (strain ATCC 25017 / CCUG 19701 / FSC 153 / O#319-036) protein is DNA polymerase IV.